The sequence spans 147 residues: Hemoglobin subunit beta (147 aa).

One can recognise a Globin domain in the interval histidine 3–histidine 147. 2 residues coordinate heme b: histidine 64 and histidine 93.

As to quaternary structure, heterotetramer of two alpha (or alpha-D) and two beta chains. In terms of tissue distribution, red blood cells.

Its function is as follows. Involved in oxygen transport from the lung to the various peripheral tissues. The beta chain is a component of adult hemoglobin A and D. The chain is Hemoglobin subunit beta from Aythya fuligula (Tufted duck).